The sequence spans 285 residues: Phosphatidylglycerol--prolipoprotein diacylglyceryl transferase (285 aa).

A run of 4 helical transmembrane segments spans residues I26–V46, F71–W91, W107–F127, and I133–V153. R154 lines the a 1,2-diacyl-sn-glycero-3-phospho-(1'-sn-glycerol) pocket. Transmembrane regions (helical) follow at residues L194–F214, G218–F238, and G256–F276.

Belongs to the Lgt family.

The protein localises to the cell inner membrane. It carries out the reaction L-cysteinyl-[prolipoprotein] + a 1,2-diacyl-sn-glycero-3-phospho-(1'-sn-glycerol) = an S-1,2-diacyl-sn-glyceryl-L-cysteinyl-[prolipoprotein] + sn-glycerol 1-phosphate + H(+). Its pathway is protein modification; lipoprotein biosynthesis (diacylglyceryl transfer). Catalyzes the transfer of the diacylglyceryl group from phosphatidylglycerol to the sulfhydryl group of the N-terminal cysteine of a prolipoprotein, the first step in the formation of mature lipoproteins. The protein is Phosphatidylglycerol--prolipoprotein diacylglyceryl transferase of Bartonella bacilliformis (strain ATCC 35685 / KC583 / Herrer 020/F12,63).